The following is a 29-amino-acid chain: NADP phosphatase 1 (29 aa).

In terms of assembly, homodimer.

Its subcellular location is the cytoplasm. In Arthrobacter sp. (strain KM), this protein is NADP phosphatase 1.